Reading from the N-terminus, the 398-residue chain is NADH-quinone oxidoreductase subunit D (398 aa).

This sequence belongs to the complex I 49 kDa subunit family. As to quaternary structure, NDH-1 is composed of 14 different subunits. Subunits NuoB, C, D, E, F, and G constitute the peripheral sector of the complex.

The protein localises to the cell inner membrane. It catalyses the reaction a quinone + NADH + 5 H(+)(in) = a quinol + NAD(+) + 4 H(+)(out). NDH-1 shuttles electrons from NADH, via FMN and iron-sulfur (Fe-S) centers, to quinones in the respiratory chain. The immediate electron acceptor for the enzyme in this species is believed to be ubiquinone. Couples the redox reaction to proton translocation (for every two electrons transferred, four hydrogen ions are translocated across the cytoplasmic membrane), and thus conserves the redox energy in a proton gradient. This chain is NADH-quinone oxidoreductase subunit D, found in Caulobacter vibrioides (strain ATCC 19089 / CIP 103742 / CB 15) (Caulobacter crescentus).